The following is a 346-amino-acid chain: Cobalt transport protein CbiM (346 aa).

Residues 1–25 (MKRITLYAAGSAIIGAMLLAGPAHA) form the signal peptide. 8 consecutive transmembrane segments (helical) span residues 31–51 (GILPLGWAALWFAVAAPFLAL), 68–88 (PLVGLMAAVVFIISCMPIPVP), 101–121 (IAAILVGPLVSVVITTVALLI), 133–153 (TLGADVVSMGVAGSFAGWFVF), 159–179 (LGAGLAVAAFVAGLLADWATY), 196–216 (FYPLFLKIVAAFVPTQLPLGV), 255–275 (ATVVMLALFCLLASLLVAGPS), and 312–332 (LLLFVFLLAGTVGGFAAGYFW).

Belongs to the CbiM family. As to quaternary structure, forms an energy-coupling factor (ECF) transporter complex composed of an ATP-binding protein (A component, CbiO), a transmembrane protein (T component, CbiQ) and 2 possible substrate-capture proteins (S components, CbiM and CbiN) of unknown stoichimetry.

The protein localises to the cell inner membrane. It participates in cofactor biosynthesis; adenosylcobalamin biosynthesis. Its function is as follows. Part of the energy-coupling factor (ECF) transporter complex CbiMNOQ involved in cobalt import. In Geobacter sulfurreducens (strain ATCC 51573 / DSM 12127 / PCA), this protein is Cobalt transport protein CbiM.